The sequence spans 241 residues: Putative hydrolase 080R (241 aa).

The 192-residue stretch at Phe-50–Leu-241 folds into the Nudix hydrolase domain. Positions Gly-136 to Thr-157 match the Nudix box motif. 3 residues coordinate Mg(2+): Glu-151, Glu-155, and Asp-204.

Belongs to the Nudix hydrolase family.

In Aedes vexans (Inland floodwater mosquito), this protein is Putative hydrolase 080R.